Here is a 142-residue protein sequence, read N- to C-terminus: SLSDKDKADVKIAWAKISPRADEIGAEALGRMLTVYPQTKTYFAHWADLSPGSGPVKHGKKVIMGAIGDAVTKFDDLLGGLASLSELHASKLRVDPSNFKILANCITVVIMFYLPGDFPPEVHASVDKFFQNLALALGQKYR.

Serine 1 bears the N-acetylserine mark. The region spanning 1 to 142 (SLSDKDKADV…LALALGQKYR (142 aa)) is the Globin domain. Histidine 58 serves as a coordination point for O2. Histidine 88 contacts heme b.

This sequence belongs to the globin family. As to quaternary structure, heterotetramer of two alpha chains and two beta chains. In terms of tissue distribution, red blood cells.

Functionally, involved in oxygen transport from gills to the various peripheral tissues. This chain is Hemoglobin subunit alpha (hba), found in Catostomus clarkii (Desert sucker).